We begin with the raw amino-acid sequence, 194 residues long: Peptidyl-tRNA hydrolase (194 aa).

Residue Tyr-16 participates in tRNA binding. His-21 serves as the catalytic Proton acceptor. Positions 67, 69, and 115 each coordinate tRNA.

The protein belongs to the PTH family. In terms of assembly, monomer.

The protein resides in the cytoplasm. The enzyme catalyses an N-acyl-L-alpha-aminoacyl-tRNA + H2O = an N-acyl-L-amino acid + a tRNA + H(+). Hydrolyzes ribosome-free peptidyl-tRNAs (with 1 or more amino acids incorporated), which drop off the ribosome during protein synthesis, or as a result of ribosome stalling. Functionally, catalyzes the release of premature peptidyl moieties from peptidyl-tRNA molecules trapped in stalled 50S ribosomal subunits, and thus maintains levels of free tRNAs and 50S ribosomes. The protein is Peptidyl-tRNA hydrolase of Sodalis glossinidius (strain morsitans).